The following is a 214-amino-acid chain: Large ribosomal subunit protein uL3 (214 aa).

Residues 133–154 (GLGAGHGTQRKHRSPGSIGGCA) form a disordered region.

This sequence belongs to the universal ribosomal protein uL3 family. In terms of assembly, part of the 50S ribosomal subunit. Forms a cluster with proteins L14 and L19.

Functionally, one of the primary rRNA binding proteins, it binds directly near the 3'-end of the 23S rRNA, where it nucleates assembly of the 50S subunit. This Streptomyces avermitilis (strain ATCC 31267 / DSM 46492 / JCM 5070 / NBRC 14893 / NCIMB 12804 / NRRL 8165 / MA-4680) protein is Large ribosomal subunit protein uL3.